A 309-amino-acid chain; its full sequence is Homoserine O-succinyltransferase (309 aa).

Cys142 (acyl-thioester intermediate) is an active-site residue. 2 residues coordinate substrate: Lys163 and Ser192. His235 (proton acceptor) is an active-site residue. Glu237 is an active-site residue. Arg249 lines the substrate pocket.

This sequence belongs to the MetA family. In terms of assembly, homodimer.

The protein resides in the cytoplasm. It catalyses the reaction L-homoserine + succinyl-CoA = O-succinyl-L-homoserine + CoA. It functions in the pathway amino-acid biosynthesis; L-methionine biosynthesis via de novo pathway; O-succinyl-L-homoserine from L-homoserine: step 1/1. Its function is as follows. Transfers a succinyl group from succinyl-CoA to L-homoserine, forming succinyl-L-homoserine. The sequence is that of Homoserine O-succinyltransferase from Escherichia coli (strain ATCC 8739 / DSM 1576 / NBRC 3972 / NCIMB 8545 / WDCM 00012 / Crooks).